The chain runs to 499 residues: MKDRAADPVTKFSPSPYETGQFLRISERADVGTPQIDYLLATQRPDGLWGSVGFELVPTLGAVAGLSSRPEYADRAGVTDAVARACEKLWELALGEGGLPKLPDTVASEIIVPSLIDLLSEVLQRHRPAVGGKAGQEQEFPSPPGANAELWRQLSDRIARGQAIPKTAWHTLEAFHPLPKQFAATVTPAADGAVTCSPSSTAAWLSAVGTDAGASTRAYLDEAQSRYGGAIPMGSSMPYFEVLWVLNLVLKYFPDVPIPREIIEEIAAGFSDSGIGGGPGLPPDGDDTAYANLAGDKLGAPTHPEILMKFWAEDHFVSYPGEQTPSETVNAHALEYLNHLRMRRGITEFGAVEDACAEWVISQQTEDGCWYDKWNVSPYYSTAACVEALLDARKQDEPQLDSLRRAREWLLRHQTDSGGWGMAEPSPEETAYAVLALDLFASRGGEGAEECAAAISRAKEFFTDESRENPPLWMGKDLYTPFRIVDVTVMCGRAVVGRY.

2 residues coordinate Mg(2+): Asp284 and Asp286. Positions 284–287 (DGDD) match the DXDD motif motif.

This sequence belongs to the terpene synthase family. As to quaternary structure, monomer. The cofactor is Mg(2+).

The enzyme catalyses (2E,6E,10E)-geranylgeranyl diphosphate = terpentedienyl diphosphate. It functions in the pathway antibiotic biosynthesis. In terms of biological role, involved in the production of the isoprenoid antibiotic terpentecin. Converts geranylgeranyl diphosphate (GGDP) into terpentedienol diphosphate (TDP) by a protonation-initiated cyclization. This Kitasatospora griseola (Streptomyces griseolosporeus) protein is Terpentedienyl-diphosphate synthase (cyc1).